The sequence spans 253 residues: uncharacterized protein (253 aa).

7 to 14 (GKGGVGKT) contacts ATP.

To M.jannaschii MJ0084 and MJ0823.

This is an uncharacterized protein from Methanocaldococcus jannaschii (strain ATCC 43067 / DSM 2661 / JAL-1 / JCM 10045 / NBRC 100440) (Methanococcus jannaschii).